Here is a 183-residue protein sequence, read N- to C-terminus: Large ribosomal subunit protein eL18 (183 aa).

The segment at 146–183 is disordered; the sequence is HFGPAPGVPHSHTKPYVRSKGRKFEKARGRRKSRGFRV. 2 stretches are compositionally biased toward basic residues: residues 156–166 and 173–183; these read SHTKPYVRSKG and RGRRKSRGFRV.

Belongs to the eukaryotic ribosomal protein eL18 family.

This chain is Large ribosomal subunit protein eL18 (RPL18), found in Cicer arietinum (Chickpea).